A 447-amino-acid polypeptide reads, in one-letter code: ATP-dependent protease ATPase subunit HslU (447 aa).

ATP is bound by residues Ile-17, 59 to 64, Asp-256, Glu-321, and Arg-393; that span reads GVGKTE.

Belongs to the ClpX chaperone family. HslU subfamily. In terms of assembly, a double ring-shaped homohexamer of HslV is capped on each side by a ring-shaped HslU homohexamer. The assembly of the HslU/HslV complex is dependent on binding of ATP.

Its subcellular location is the cytoplasm. ATPase subunit of a proteasome-like degradation complex; this subunit has chaperone activity. The binding of ATP and its subsequent hydrolysis by HslU are essential for unfolding of protein substrates subsequently hydrolyzed by HslV. HslU recognizes the N-terminal part of its protein substrates and unfolds these before they are guided to HslV for hydrolysis. The chain is ATP-dependent protease ATPase subunit HslU from Stutzerimonas stutzeri (strain A1501) (Pseudomonas stutzeri).